The sequence spans 123 residues: Small ribosomal subunit protein uS13c (123 aa).

Positions 99-123 (GQRTRSNARTRRGAKKTVAGKKLAK) are disordered. A compositionally biased stretch (basic residues) spans 100-123 (QRTRSNARTRRGAKKTVAGKKLAK).

The protein belongs to the universal ribosomal protein uS13 family. Part of the 30S ribosomal subunit.

Its subcellular location is the plastid. The protein localises to the chloroplast. Its function is as follows. Located at the top of the head of the 30S subunit, it contacts several helices of the 16S rRNA. This Cyanidioschyzon merolae (strain NIES-3377 / 10D) (Unicellular red alga) protein is Small ribosomal subunit protein uS13c.